The chain runs to 464 residues: Rhodopsin (464 aa).

Over 1–33 (MGRDIPDNETWWYNPTMEVHPHWKQFNQVPDAV) the chain is Extracellular. N-linked (GlcNAc...) asparagine glycosylation occurs at N8. Residues 34–58 (YYSLGIFIGICGIIGCTGNGIVIYL) form a helical membrane-spanning segment. At 59–70 (FTKTKSLQTPAN) the chain is on the cytoplasmic side. The helical transmembrane segment at 71–97 (MFIINLAFSDFTFSLVNGFPLMTISCF) threads the bilayer. At 98 to 109 (IKKWVFGMAACK) the chain is on the extracellular side. A disulfide bond links C108 and C186. Residues 110-131 (VYGFIGGIFGLMSIMTMSMISI) form a helical membrane-spanning segment. The 'Ionic lock' involved in activated form stabilization motif lies at 132–134 (DRY). The Cytoplasmic portion of the chain corresponds to 132–151 (DRYNVIGRPMAASKKMSHRR). A helical membrane pass occupies residues 152-172 (AFLMIIFVWMWSTLWSIGPIF). Topologically, residues 173–199 (GWGAYVLEGVLCNCSFDYITRDSATRS) are extracellular. The chain crosses the membrane as a helical span at residues 200-224 (NIVCMYIFAFCFPILIIFFCYFNIV). Over 225–261 (MAVSNHEKEMAAMAKRLNAKELRKAQAGASAEMKLAK) the chain is Cytoplasmic. A helical membrane pass occupies residues 262–283 (ISIVIVTQFLLSWSPYAVVALL). Residues 284–293 (AQFGPIEWVT) are Extracellular-facing. A helical transmembrane segment spans residues 294 to 315 (PYAAQLPVMFAKASAIHNPLIY). N6-(retinylidene)lysine is present on K305. The Cytoplasmic segment spans residues 316–464 (SVSHPKFREA…QGVDNQAYQA (149 aa)). Residues C336 and C337 are each lipidated (S-palmitoyl cysteine). The segment at 344–464 (VEDDKDAETE…QGVDNQAYQA (121 aa)) is disordered. Positions 367-401 (AAQMKEMMAMMQKMQQQQAAYPPQGAYPPQGGYPP) are enriched in low complexity. Pro residues-rich tracts occupy residues 416–425 (QGYPPPPQGY) and 434–452 (QGYP…PQAA).

The protein belongs to the G-protein coupled receptor 1 family. Opsin subfamily. Contains one covalently linked retinal chromophore. Upon light absorption, the covalently bound 11-cis-retinal is converted to all-trans-retinal. After hydrolysis of the Schiff base and release of the covalently bound all-trans-retinal, active rhodopsin is regenerated by binding of a fresh molecule of 11-cis-retinal.

The protein resides in the cell projection. It is found in the rhabdomere membrane. Its function is as follows. Photoreceptor required for image-forming vision at low light intensity. Light-induced isomerization of 11-cis to all-trans retinal triggers a conformational change that activates signaling via G-proteins. Signaling mediates the activation of phospholipase C. Subsequent receptor phosphorylation mediates displacement of the bound G-protein alpha subunit by arrestin and terminates signaling. This chain is Rhodopsin (RHO), found in Sepia officinalis (Common cuttlefish).